Consider the following 260-residue polypeptide: Ribosomal RNA small subunit methyltransferase G (260 aa).

S-adenosyl-L-methionine contacts are provided by Gly-111, Phe-116, and Arg-181.

This sequence belongs to the methyltransferase superfamily. RNA methyltransferase RsmG family.

It localises to the cytoplasm. It carries out the reaction guanosine(527) in 16S rRNA + S-adenosyl-L-methionine = N(7)-methylguanosine(527) in 16S rRNA + S-adenosyl-L-homocysteine. Its function is as follows. Specifically methylates the N7 position of guanine in position 527 of 16S rRNA. The sequence is that of Ribosomal RNA small subunit methyltransferase G from Nitrobacter hamburgensis (strain DSM 10229 / NCIMB 13809 / X14).